We begin with the raw amino-acid sequence, 144 residues long: Bacilliredoxin BrxA (144 aa).

Active-site nucleophile residues include Cys-53 and Cys-55. Cys-53 is subject to S-bacillithiol cysteine disulfide. The short motif at 53-55 (CGC) is the CXC active site motif element. Cysteines 53 and 55 form a disulfide.

It belongs to the bacilliredoxin family. Post-translationally, N-terminal Cys of the CXC active site motif can react with bacillithiol (BSH) to form mixed disulfides. S-bacillithiolation protects Cys residues against overoxidation by acting as a redox switch in response to oxidative stress.

Its function is as follows. S-bacillithiolation is the formation of mixed disulfide bonds between protein thiols and the general thiol reductant bacillithiol (BSH) under oxidative stress. BSH is an equivalent of glutathione (GSH) in Firmicutes. This protein is a dithiol bacilliredoxin, which debacillithiolates (removes BSH) the S-bacillithiolated OhrR (OhrR-SSB) in vitro and in vivo NaOCl-generated S-bacillithiolated MetE (MetE-SSB). Involved in maintaining redox homeostasis in response to disulfide stress conditions. Has a redox potential of -130 mV. Displays weak protein disulfide isomerase activity in vitro. The protein is Bacilliredoxin BrxA of Bacillus subtilis (strain 168).